The chain runs to 457 residues: Cytochrome b-c1 complex subunit 1, mitochondrial (457 aa).

A mitochondrion-targeting transit peptide spans 1–26 (MLRTVTSKTVSNQFKRSLATAVATPK).

This sequence belongs to the peptidase M16 family. UQCRC1/QCR1 subfamily. In terms of assembly, component of the ubiquinol-cytochrome c oxidoreductase (cytochrome b-c1 complex, complex III, CIII), a multisubunit enzyme composed of 10 subunits. The complex is composed of 3 respiratory subunits cytochrome b (COB), cytochrome c1 (CYT1) and Rieske protein (RIP1), 2 core protein subunits COR1 and QCR2, and 5 low-molecular weight protein subunits QCR6, QCR7, QCR8, QCR9 and QCR10. The complex exists as an obligatory dimer and forms supercomplexes (SCs) in the inner mitochondrial membrane with a monomer or a dimer of cytochrome c oxidase (complex IV, CIV), resulting in 2 different assemblies (supercomplexes III(2)IV and III(2)IV(2)). COR1 interacts with COX5A at the CIII-CIV interface.

It localises to the mitochondrion inner membrane. Functionally, component of the ubiquinol-cytochrome c oxidoreductase, a multisubunit transmembrane complex that is part of the mitochondrial electron transport chain which drives oxidative phosphorylation. The respiratory chain contains 3 multisubunit complexes succinate dehydrogenase (complex II, CII), ubiquinol-cytochrome c oxidoreductase (cytochrome b-c1 complex, complex III, CIII) and cytochrome c oxidase (complex IV, CIV), that cooperate to transfer electrons derived from NADH and succinate to molecular oxygen, creating an electrochemical gradient over the inner membrane that drives transmembrane transport and the ATP synthase. The cytochrome b-c1 complex catalyzes electron transfer from ubiquinol to cytochrome c, linking this redox reaction to translocation of protons across the mitochondrial inner membrane, with protons being carried across the membrane as hydrogens on the quinol. In the process called Q cycle, 2 protons are consumed from the matrix, 4 protons are released into the intermembrane space and 2 electrons are passed to cytochrome c. This chain is Cytochrome b-c1 complex subunit 1, mitochondrial (COR1), found in Saccharomyces cerevisiae (strain ATCC 204508 / S288c) (Baker's yeast).